Consider the following 195-residue polypeptide: MFIVGLTGGIGSGKSAASQWFEKQGIQVVDADIVAREVVDVGQPALKEIATAFGDWVLQADGSLNRRALREHIFQSPESRHTLEAITHPIIRKSIIEQLNAATSPYVILVSPLLFETNQHELTDRNLLIDASEEIQIARASQRDGQSIQQIQKIIAAQMPRAEKQQRADDIVLNDGHLKHLYQQLIALHENYLNH.

The DPCK domain maps to 3–195 (IVGLTGGIGS…IALHENYLNH (193 aa)). 11–16 (GSGKSA) is an ATP binding site.

This sequence belongs to the CoaE family.

Its subcellular location is the cytoplasm. It carries out the reaction 3'-dephospho-CoA + ATP = ADP + CoA + H(+). The protein operates within cofactor biosynthesis; coenzyme A biosynthesis; CoA from (R)-pantothenate: step 5/5. Functionally, catalyzes the phosphorylation of the 3'-hydroxyl group of dephosphocoenzyme A to form coenzyme A. The polypeptide is Dephospho-CoA kinase (Acinetobacter baylyi (strain ATCC 33305 / BD413 / ADP1)).